Reading from the N-terminus, the 127-residue chain is MGLPKLNRLKSPREFQAVYQRGQRYQSDRLVLRVLWITDKTSNPAPTQFGIAISQKVSKKAVVRNRLKRQIKGAIRVLLPFIAPGAKIVISVRGNVSECQYEHFLRELKKLLIKAKIIYGHTREYFL.

This sequence belongs to the RnpA family. Consists of a catalytic RNA component (M1 or rnpB) and a protein subunit.

It carries out the reaction Endonucleolytic cleavage of RNA, removing 5'-extranucleotides from tRNA precursor.. RNaseP catalyzes the removal of the 5'-leader sequence from pre-tRNA to produce the mature 5'-terminus. It can also cleave other RNA substrates such as 4.5S RNA. The protein component plays an auxiliary but essential role in vivo by binding to the 5'-leader sequence and broadening the substrate specificity of the ribozyme. This Rippkaea orientalis (strain PCC 8801 / RF-1) (Cyanothece sp. (strain PCC 8801)) protein is Ribonuclease P protein component.